The following is a 167-amino-acid chain: Transmembrane protein B169L (167 aa).

2 helical membrane-spanning segments follow: residues 28–48 (NPFIVALIITAVVLVVFFAIC) and 60–80 (TAIYLYICIVALLFLHYYVLN). Asn88 carries an N-linked (GlcNAc...) asparagine; by host glycan.

This sequence belongs to the asfivirus B169L family.

It localises to the host membrane. The protein resides in the virion. The polypeptide is Transmembrane protein B169L (African swine fever virus (isolate Tick/Malawi/Lil 20-1/1983) (ASFV)).